We begin with the raw amino-acid sequence, 1059 residues long: MSSRPSSSASSRRSSSPFSAGSRRPPTSSSSSAGSYLTGRLMPRSYSTASSVSSSSHFFGGGGGSGGGSRSTTPGRRGSSSSSLVGPVPSPPSPVPFPSAEELVIEDTSRSGDSISVTIRFRPLSEREIQRGDEISWYADGERLVRCEYNPATAYGYDRVFGPKTTTEAVYDVAARPVVKGAMEGINGTVFAYGVTSSGKTHTMHGDQNCPGIIPLAIKDVFSLIQDTPGREFLLRVSYLEIYNEVINDLLDPTGQNLRVREDAQGTYVEGIKEEVVLSPGHALSFIAAGEEHRHVGSNNFNLFSSRSHTIFTLMIESSAHGDEYDGVMYSQLNLIDLAGSESSKTETTGLRRREGSYINKSLLTLGTVIGKLSEGRATHIPYRDSKLTRLLQSSLSGHGHVSLICTITPASSNMEETHNTLKFASRAKRVEIYAARNRMIDEKSLIKKYQREISSLKQELDQLRRGLIGGASQEEIMILRQQLEEGQVKMQSRLEEEEEAKAALMSRIQRLTKLILVSTKNNIPALTDTSSHQRHNSVNEEDKVSTSQDSSMLVQNDSATKDSLSSASPDAVDEINQLRCASGDHSSIAGSGPDEMQGGITASDQMDLLIEQVKMLAGEIAFGTSSLKRLIEQSIEDPEGTKNQIDNLEREIREKRRHMRALEQKLMESGEASVANASMMDMQQTITKLTAQCSEKAFELELRSADNRVLQEQLQQKNVEINELQEKVLRLEQQLTTNTEASPEQCTEHELHDLKSKLQLKEAESEKLKYEHMKITEENRELVNQNSTLCEEVAYAKELASSAAVELKNLAEEVTKLSVQNAKQAKELLIAQELAHSRVPGRKGRSAGRGRDEVGTWSLDLEDMKMELQARKQREAALEAALAEKEHLEEEYKKKFDEAKKKELSLENDLAGMWVLVAKLKRGALGISDLNVDDRSINLADITNGTKENKADKNVAVVEKQLSDNTVKSLTAEEYRNPEFEPLLVRLKAKIQEMKEKETDSLGDKDGNSHVCKVCFESATAAVLLPCRHFCLCKPCSLACSECPLCRTRIADRIITFT.

Composition is skewed to low complexity over residues 1 to 35 (MSSR…SAGS) and 43 to 58 (PRSY…SSHF). A chloroplast-targeting transit peptide spans 1–48 (MSSRPSSSASSRRSSSPFSAGSRRPPTSSSSSAGSYLTGRLMPRSYST). The segment at 1–99 (MSSRPSSSAS…SPPSPVPFPS (99 aa)) is disordered. Positions 59 to 69 (FGGGGGSGGGS) are enriched in gly residues. Low complexity predominate over residues 70–87 (RSTTPGRRGSSSSSLVGP). A compositionally biased stretch (pro residues) spans 88–97 (VPSPPSPVPF). The region spanning 114-431 (SISVTIRFRP…LKFASRAKRV (318 aa)) is the Kinesin motor domain. 194–201 (GVTSSGKT) is an ATP binding site. Positions 435-518 (AARNRMIDEK…IQRLTKLILV (84 aa)) form a coiled coil. Positions 526 to 570 (ALTDTSSHQRHNSVNEEDKVSTSQDSSMLVQNDSATKDSLSSASP) are disordered. Positions 546 to 569 (STSQDSSMLVQNDSATKDSLSSAS) are enriched in polar residues. Coiled coils occupy residues 640–674 (EGTK…GEAS), 700–781 (ELEL…EENR), and 862–910 (LEDM…LEND). The RING-type zinc finger occupies 1013 to 1048 (CKVCFESATAAVLLPCRHFCLCKPCSLACSECPLCR).

Belongs to the TRAFAC class myosin-kinesin ATPase superfamily. Kinesin family. KIN-7 subfamily.

Its subcellular location is the plastid. It is found in the chloroplast. The sequence is that of Kinesin-like protein KIN-7K, chloroplastic from Oryza sativa subsp. japonica (Rice).